A 1337-amino-acid polypeptide reads, in one-letter code: Protein HEG homolog 1 (1337 aa).

The first 31 residues, 1–31 (MATPRAPRWPPPSLLLLLLLPLLLLPPAAPG), serve as a signal peptide directing secretion. Low complexity-rich tracts occupy residues 28–40 (AAPG…PSPA) and 54–66 (PGAG…PGVA). Disordered regions lie at residues 28–149 (AAPG…SNMA), 175–211 (SSLL…GFLE), 235–296 (ASHP…QNPS), 313–675 (VPRT…PSPI), 723–767 (LIPS…TVSL), and 860–909 (EGNR…PQTT). At 32–1204 (ARGSLPSPAH…GLNCGNPYQL (1173 aa)) the chain is on the extracellular side. Residues 118–131 (TAQNARMSHSSSEG) are compositionally biased toward polar residues. Low complexity predominate over residues 175-190 (SSLLSLESLPESPSSS). Polar residues-rich tracts occupy residues 195-206 (RITPSQTESGTS), 247-258 (VLSQKRNSSGQE), 283-296 (IKNG…QNPS), and 340-361 (GITS…NSGL). The segment covering 470–480 (RGGGEDSGMGG) has biased composition (gly residues). Low complexity-rich tracts occupy residues 486–502 (SSSS…LDSS) and 556–575 (SYSE…DSPS). Composition is skewed to polar residues over residues 576–585 (QAQPKQSSMS) and 592–617 (AQSS…NMPN). Residues 637 to 675 (PSTQPSPSQPQPFSSALPSTRSPGSTSETTTSSPSPSPI) show a composition bias toward low complexity. Polar residues-rich tracts occupy residues 725-742 (PSNQ…QQEK) and 751-763 (SLVS…TKAV). Residues 868 to 884 (PTTQPIPLTTSTTSAGE) show a composition bias toward low complexity. A compositionally biased stretch (basic and acidic residues) spans 885-896 (RTTELGRAEESS). Residues 897-909 (PSHFLTPSSPQTT) show a composition bias toward polar residues. Residues 941-979 (PVNSCTVNPCLHDGKCIVDLTGRGYRCVCPPAWQGENCS) enclose the EGF-like 1 domain. Intrachain disulfides connect Cys945/Cys956, Cys950/Cys967, Cys969/Cys978, Cys985/Cys996, Cys990/Cys1005, and Cys1007/Cys1018. Positions 981–1019 (DVNECLSSPCPPLATCNNTQGSFTCRCPVGYQLEKGICN) constitute an EGF-like 2; calcium-binding domain. Residue Asn1093 is glycosylated (N-linked (GlcNAc...) asparagine). A helical transmembrane segment spans residues 1205-1225 (ITVVIAAAGGGLLLILGVALI). The Cytoplasmic portion of the chain corresponds to 1226–1337 (VTCCRKSKND…SDESRRRDYF (112 aa)). Residue Ser1315 is modified to Phosphoserine.

In terms of assembly, interacts with CCM2 and KRIT1; KRIT1 markedly facilitates interaction with CCM2.

The protein resides in the cell membrane. Its subcellular location is the cell junction. In terms of biological role, receptor component of the CCM signaling pathway which is a crucial regulator of heart and vessel formation and integrity. May be acting by stabilizing endothelial cell junctions. The sequence is that of Protein HEG homolog 1 (Heg1) from Mus musculus (Mouse).